A 125-amino-acid polypeptide reads, in one-letter code: Small ribosomal subunit protein uS13 (125 aa).

Residues 94-116 (GLPVRGQRTRTNARTRKGPRKAV) show a composition bias toward basic residues. The interval 94–125 (GLPVRGQRTRTNARTRKGPRKAVRASSAKAGR) is disordered.

The protein belongs to the universal ribosomal protein uS13 family. In terms of assembly, part of the 30S ribosomal subunit. Forms a loose heterodimer with protein S19. Forms two bridges to the 50S subunit in the 70S ribosome.

Located at the top of the head of the 30S subunit, it contacts several helices of the 16S rRNA. In the 70S ribosome it contacts the 23S rRNA (bridge B1a) and protein L5 of the 50S subunit (bridge B1b), connecting the 2 subunits; these bridges are implicated in subunit movement. Contacts the tRNAs in the A and P-sites. The protein is Small ribosomal subunit protein uS13 of Nitrosospira multiformis (strain ATCC 25196 / NCIMB 11849 / C 71).